We begin with the raw amino-acid sequence, 108 residues long: Ig kappa chain V-V region MOPC 149 (108 aa).

The segment at 1-23 (DIQMTQSPDYLSASVGETVTITC) is framework-1. A disulfide bridge connects residues Cys-23 and Cys-88. The tract at residues 24-34 (RASENIYSYLA) is complementarity-determining-1. The segment at 35–49 (WYQQKQGKSPQLLVY) is framework-2. The complementarity-determining-2 stretch occupies residues 50–56 (DAKTLVE). A framework-3 region spans residues 57-88 (GVPSRFSGSGSGTQFSLKINSLQPEDFGSYYC). The interval 89-97 (QHHYGIPFT) is complementarity-determining-3. The tract at residues 98–108 (FGSGTKLEIKR) is framework-4.

This Mus musculus (Mouse) protein is Ig kappa chain V-V region MOPC 149.